Consider the following 231-residue polypeptide: Ureidoacrylate amidohydrolase RutB (231 aa).

D25 acts as the Proton acceptor in catalysis. K134 is an active-site residue. The active-site Nucleophile is C167.

Belongs to the isochorismatase family. RutB subfamily.

It catalyses the reaction (Z)-3-ureidoacrylate + H2O + H(+) = (Z)-3-aminoacrylate + NH4(+) + CO2. The enzyme catalyses (Z)-3-ureidoacrylate + H2O = (Z)-3-aminoacrylate + carbamate + H(+). It carries out the reaction (Z)-2-methylureidoacrylate + H2O + H(+) = (Z)-2-methylaminoacrylate + NH4(+) + CO2. In terms of biological role, hydrolyzes ureidoacrylate to form aminoacrylate and carbamate. The carbamate hydrolyzes spontaneously, thereby releasing one of the nitrogen atoms of the pyrimidine ring as ammonia and one of its carbon atoms as CO2. The chain is Ureidoacrylate amidohydrolase RutB from Escherichia coli O9:H4 (strain HS).